The primary structure comprises 275 residues: NH(3)-dependent NAD(+) synthetase (275 aa).

Residue 50–57 (GISGGVDS) coordinates ATP. Mg(2+) is bound at residue D56. R147 serves as a coordination point for deamido-NAD(+). Residue T167 coordinates ATP. E172 contacts Mg(2+). Deamido-NAD(+)-binding residues include K180 and D187. ATP-binding residues include K196 and T218. 267-268 (HK) contacts deamido-NAD(+).

It belongs to the NAD synthetase family. Homodimer.

The enzyme catalyses deamido-NAD(+) + NH4(+) + ATP = AMP + diphosphate + NAD(+) + H(+). It participates in cofactor biosynthesis; NAD(+) biosynthesis; NAD(+) from deamido-NAD(+) (ammonia route): step 1/1. Its function is as follows. Catalyzes the ATP-dependent amidation of deamido-NAD to form NAD. Uses ammonia as a nitrogen source. The protein is NH(3)-dependent NAD(+) synthetase of Pseudomonas syringae pv. syringae (strain B728a).